The chain runs to 359 residues: 3-dehydroquinate synthase (359 aa).

Residues 71-76 (DGEAYK), 105-109 (GVIGD), 129-130 (TT), K142, and K151 each bind NAD(+). Positions 184, 247, and 264 each coordinate Zn(2+).

This sequence belongs to the sugar phosphate cyclases superfamily. Dehydroquinate synthase family. It depends on Co(2+) as a cofactor. Requires Zn(2+) as cofactor. NAD(+) is required as a cofactor.

It localises to the cytoplasm. The enzyme catalyses 7-phospho-2-dehydro-3-deoxy-D-arabino-heptonate = 3-dehydroquinate + phosphate. It functions in the pathway metabolic intermediate biosynthesis; chorismate biosynthesis; chorismate from D-erythrose 4-phosphate and phosphoenolpyruvate: step 2/7. In terms of biological role, catalyzes the conversion of 3-deoxy-D-arabino-heptulosonate 7-phosphate (DAHP) to dehydroquinate (DHQ). The polypeptide is 3-dehydroquinate synthase (Burkholderia mallei (strain NCTC 10247)).